We begin with the raw amino-acid sequence, 341 residues long: RNA 3'-terminal phosphate cyclase (341 aa).

ATP contacts are provided by residues glutamine 102 and 283 to 287 (HLADQ). The Tele-AMP-histidine intermediate role is filled by histidine 308.

Belongs to the RNA 3'-terminal cyclase family. Type 1 subfamily.

It localises to the cytoplasm. The catalysed reaction is a 3'-end 3'-phospho-ribonucleotide-RNA + ATP = a 3'-end 2',3'-cyclophospho-ribonucleotide-RNA + AMP + diphosphate. Catalyzes the conversion of 3'-phosphate to a 2',3'-cyclic phosphodiester at the end of RNA. The mechanism of action of the enzyme occurs in 3 steps: (A) adenylation of the enzyme by ATP; (B) transfer of adenylate to an RNA-N3'P to produce RNA-N3'PP5'A; (C) and attack of the adjacent 2'-hydroxyl on the 3'-phosphorus in the diester linkage to produce the cyclic end product. The biological role of this enzyme is unknown but it is likely to function in some aspects of cellular RNA processing. The sequence is that of RNA 3'-terminal phosphate cyclase from Pseudomonas aeruginosa (strain UCBPP-PA14).